A 483-amino-acid chain; its full sequence is Regulatory protein ViaA (483 aa).

It belongs to the ViaA family. In terms of assembly, homodimer. Interacts with RavA.

The protein localises to the cytoplasm. In terms of biological role, component of the RavA-ViaA chaperone complex, which may act on the membrane to optimize the function of some of the respiratory chains. ViaA stimulates the ATPase activity of RavA. This chain is Regulatory protein ViaA, found in Escherichia coli O139:H28 (strain E24377A / ETEC).